The sequence spans 613 residues: UvrABC system protein C (613 aa).

The GIY-YIG domain occupies 29-107 (DVAGVYKMLG…IKTLKPKYNI (79 aa)). A UVR domain is found at 217 to 252 (KELQRELFDSMRKFSDNLDYESAMVYRDRLQALKSI).

Belongs to the UvrC family. In terms of assembly, interacts with UvrB in an incision complex.

It is found in the cytoplasm. Its function is as follows. The UvrABC repair system catalyzes the recognition and processing of DNA lesions. UvrC both incises the 5' and 3' sides of the lesion. The N-terminal half is responsible for the 3' incision and the C-terminal half is responsible for the 5' incision. The polypeptide is UvrABC system protein C (Anaplasma marginale (strain St. Maries)).